Reading from the N-terminus, the 252-residue chain is O-methyltransferase hkm8 (252 aa).

S-adenosyl-L-methionine is bound by residues E73, 75-76, S81, and D100; that span reads GT.

It belongs to the class I-like SAM-binding methyltransferase superfamily. Cation-dependent O-methyltransferase family.

It participates in secondary metabolite biosynthesis. O-methyltransferase; part of the gene cluster that mediates the biosynthesis of hancockiamides, an unusual new family of N-cinnamoylated piperazines. The NRPS hkm10 and the NmrA-like reductase hkm9 are proposed to convert two molecules of L-Phe to the intermediary piperazine called xenocockiamide A. Xenocockiamide A is then converted to hancockiamide D via a series of hydroxylations and O-methylations. The tyrosinase hkm6 may catalyze an aromatic hydroxylation, then the 2-oxoglutarate-dependent Fe(II) dioxygenase hkm4 and the FAD-dependent phenol hydroxylase hkm7 may catalyze consecutive hydroxylations to install 2 more hydroxy groups, and the methyltransferase hkm8 probably catalyzes two methylations using 2 molecules of S-adenosyl-L-methionine (SAM). The NRPS hkm11 activates and transfers trans-cinnamate supplied by the PAL hkm12 to hancockiamide D and produces hancockiamide A. NRPS Hkm11 has the flexibility to tolerate the bulky hancockiamide G as a substrate and the absence of the acetyl-transferase hkm3 opens up the opportunity for hkm11 to introduce a second N-cinnamoyl moiety. The cytochrome P450 monooxygenase hkm5 catalyzes the methylenedioxy bridge formation, converting hancockiamide A into hancockiamide G. Hkm5 can also convert hancockiamide B into hancockiamide C, and hancockiamide D into hancockiamide H. The N-acetyltransferase hkm3 finally transfers an acetyl group to 1-N of piperazine, converting hancockiamide A into hancockiamide B and hancockiamide G into hancockiamide C. This chain is O-methyltransferase hkm8, found in Aspergillus hancockii.